A 553-amino-acid polypeptide reads, in one-letter code: Dihydroxy-acid dehydratase (553 aa).

Residue Asp78 participates in Mg(2+) binding. [2Fe-2S] cluster is bound at residue Cys119. Mg(2+)-binding residues include Asp120 and Lys121. Lys121 is subject to N6-carboxylysine. Cys193 provides a ligand contact to [2Fe-2S] cluster. Glu441 contacts Mg(2+). Catalysis depends on Ser467, which acts as the Proton acceptor.

Belongs to the IlvD/Edd family. As to quaternary structure, homodimer. [2Fe-2S] cluster is required as a cofactor. Requires Mg(2+) as cofactor.

The enzyme catalyses (2R)-2,3-dihydroxy-3-methylbutanoate = 3-methyl-2-oxobutanoate + H2O. The catalysed reaction is (2R,3R)-2,3-dihydroxy-3-methylpentanoate = (S)-3-methyl-2-oxopentanoate + H2O. It participates in amino-acid biosynthesis; L-isoleucine biosynthesis; L-isoleucine from 2-oxobutanoate: step 3/4. It functions in the pathway amino-acid biosynthesis; L-valine biosynthesis; L-valine from pyruvate: step 3/4. In terms of biological role, functions in the biosynthesis of branched-chain amino acids. Catalyzes the dehydration of (2R,3R)-2,3-dihydroxy-3-methylpentanoate (2,3-dihydroxy-3-methylvalerate) into 2-oxo-3-methylpentanoate (2-oxo-3-methylvalerate) and of (2R)-2,3-dihydroxy-3-methylbutanoate (2,3-dihydroxyisovalerate) into 2-oxo-3-methylbutanoate (2-oxoisovalerate), the penultimate precursor to L-isoleucine and L-valine, respectively. In Geobacter sulfurreducens (strain ATCC 51573 / DSM 12127 / PCA), this protein is Dihydroxy-acid dehydratase.